A 205-amino-acid chain; its full sequence is Glycerol-3-phosphate acyltransferase (205 aa).

The Periplasmic segment spans residues 1 to 3 (MSA). A helical transmembrane segment spans residues 4–24 (IAPGMILFAYLCGSISSAILV). Topologically, residues 25-52 (CRIAGLPDPRESGSGNPGATNVLRIGGK) are cytoplasmic. A helical transmembrane segment spans residues 53 to 73 (GAAVAVLIFDILKGMLPVWGA). Residues 74–80 (YALGVTP) lie on the Periplasmic side of the membrane. Residues 81–101 (FWLGLIAIAACLGHIWPVFFG) form a helical membrane-spanning segment. Topologically, residues 102-111 (FKGGKGVATA) are cytoplasmic. Residues 112–132 (FGAIAPIGWDLTGVMAGTWLL) traverse the membrane as a helical segment. The Periplasmic segment spans residues 133–137 (TVLLS). Residues 138-158 (GYSSLGAIVSALIAPFYVWWF) traverse the membrane as a helical segment. At 159-205 (KPQFTFPVSMLSCLILLRHHDNIQRLWRRQETKIWTKLKKKRQKDSE) the chain is on the cytoplasmic side.

This sequence belongs to the PlsY family. Probably interacts with PlsX.

It is found in the cell inner membrane. It catalyses the reaction sn-glycerol 3-phosphate + an acyl-CoA = a 1-acyl-sn-glycero-3-phosphate + CoA. The catalysed reaction is a fatty acyl-[ACP] + sn-glycerol 3-phosphate = a 1-acyl-sn-glycero-3-phosphate + holo-[ACP]. It participates in lipid metabolism; phospholipid metabolism. Its function is as follows. Catalyzes the transfer of an acyl group from acyl-ACP to glycerol-3-phosphate (G3P) to form lysophosphatidic acid (LPA). This enzyme can also utilize acyl-CoA as fatty acyl donor, but not acyl-PO(4). This Salmonella schwarzengrund (strain CVM19633) protein is Glycerol-3-phosphate acyltransferase.